The sequence spans 375 residues: ATAGKVIKCKAAVCWGPKQPLSIEEIEVAPPKRHEVRVKIVATGICRSDDHVISGALSDMKFPVILGHEAAGVVESVGEGVTKFKPGDKVIPLFVPQCGECRCCKNPESNLCYKNDIGKYDGVLLDKTSRFTCKGKSIHNFISTSTFTEYTVLDEIAVAKIHEDAPLEKVCLIGCGFSTGYGSAVNTGKVKPGSTCAVFGLGGVGLSVIIGCKVAGASRIIGVDLNSDKFTTAKECGATECINPKDYNIPIHEVLAKMTDDGVDYAFEVIGNTTVMTSALSSSHFGCGKTVIVGLAPSSAVMSFDPLLILTGRILTGAVFGGWKSKDDVPKLVRDYLNKKFDFDPLITHYMPFEKINEGFELLRNGKSIRTILTF.

An N-acetylalanine modification is found at alanine 1. Zn(2+) is bound by residues cysteine 46, histidine 68, cysteine 98, cysteine 101, cysteine 104, cysteine 112, and cysteine 175. NAD(+)-binding positions include 200–205 (GLGGVG), aspartate 224, lysine 229, 293–295 (VGL), and arginine 370.

It belongs to the zinc-containing alcohol dehydrogenase family. Class-I subfamily. Requires Zn(2+) as cofactor.

It is found in the cytoplasm. It carries out the reaction a primary alcohol + NAD(+) = an aldehyde + NADH + H(+). The enzyme catalyses a secondary alcohol + NAD(+) = a ketone + NADH + H(+). The sequence is that of Alcohol dehydrogenase 1 from Pelophylax perezi (Perez's frog).